Consider the following 287-residue polypeptide: MITLLTKPTVFLITGLSGAGKTLLLQSLEDEGYYTVDNIPPHLIESFLNILCTSNVKKLAIVSDIRWKDPQKLIELFKNVESLAKCTMEIHKVFLKADKSELINRYKKTRRTHPLGLSLENAIDEEIKVMSEIESSCDIVIDTSSTEPTEFKKRFFQMIKEDMKKLKLNFISFGFKNGIPPISDYVFDVRYLPNPFYFPEMYELTGLDMKVMEFLEKFKETHETVDKIANLAKFIQDKYSESGRIEAYFCIGCTGGQHRSVYIAQKVYEILKKEGREVSIDHRDIER.

15 to 22 (GLSGAGKT) contributes to the ATP binding site. Residue 64-67 (DIRW) coordinates GTP.

The protein belongs to the RapZ-like family.

Displays ATPase and GTPase activities. The sequence is that of Nucleotide-binding protein Pmob_0154 from Petrotoga mobilis (strain DSM 10674 / SJ95).